The chain runs to 286 residues: ATP synthase gamma chain (286 aa).

This sequence belongs to the ATPase gamma chain family. As to quaternary structure, F-type ATPases have 2 components, CF(1) - the catalytic core - and CF(0) - the membrane proton channel. CF(1) has five subunits: alpha(3), beta(3), gamma(1), delta(1), epsilon(1). CF(0) has three main subunits: a, b and c.

The protein resides in the cell inner membrane. Produces ATP from ADP in the presence of a proton gradient across the membrane. The gamma chain is believed to be important in regulating ATPase activity and the flow of protons through the CF(0) complex. The chain is ATP synthase gamma chain from Pseudomonas fluorescens (strain ATCC BAA-477 / NRRL B-23932 / Pf-5).